Here is a 211-residue protein sequence, read N- to C-terminus: Phosphoglycerate mutase (211 aa).

Substrate is bound by residues 14-21 (RHGESEWN) and 27-28 (TG). His15 (tele-phosphohistidine intermediate) is an active-site residue. Position 37 is a phosphothreonine (Thr37). Phosphoserine is present on Ser62. Residues Arg66, 93 to 96 (ERYY), Lys104, 120 to 121 (RR), and 164 to 165 (GN) each bind substrate. Residue Glu93 is the Proton donor/acceptor of the active site. Residue Tyr96 is modified to Phosphotyrosine. At Ser166 the chain carries Phosphoserine.

This sequence belongs to the phosphoglycerate mutase family. BPG-dependent PGAM subfamily. Monomer. The N-terminus is blocked.

The enzyme catalyses (2R)-2-phosphoglycerate = (2R)-3-phosphoglycerate. Its pathway is carbohydrate degradation; glycolysis; pyruvate from D-glyceraldehyde 3-phosphate: step 3/5. The chain is Phosphoglycerate mutase (gpm1) from Schizosaccharomyces pombe (strain 972 / ATCC 24843) (Fission yeast).